The chain runs to 175 residues: Alpha-crystallin B chain (175 aa).

Residue methionine 1 is modified to N-acetylmethionine. Phosphoserine is present on residues serine 19, serine 45, and serine 59. A sHSP domain is found at 56–164 (RAPSWIDTGL…PERTIPITRE (109 aa)). Histidine 83 lines the Zn(2+) pocket. The residue at position 92 (lysine 92) is an N6-acetyllysine. Positions 104, 106, 111, and 119 each coordinate Zn(2+). A disordered region spans residues 142–175 (VLTVNGPRKQASGPERTIPITREEKPAVTAAPKK). An N6-acetyllysine modification is found at lysine 166. An O-linked (GlcNAc) threonine glycan is attached at threonine 170.

It belongs to the small heat shock protein (HSP20) family. As to quaternary structure, heteromer composed of three CRYAA and one CRYAB subunits. Aggregates with homologous proteins, including the small heat shock protein HSPB1, to form large heteromeric complexes. Inter-subunit bridging via zinc ions enhances stability, which is crucial as there is no protein turn over in the lens. Interacts with HSPBAP1. Interacts with TTN/titin. Interacts with TMEM109; in the cellular response to DNA damage. Interacts with DES; binds rapidly during early stages of DES filament assembly and a reduced binding seen in the later stages. Interacts with TMED10; the interaction mediates the translocation from the cytoplasm into the ERGIC (endoplasmic reticulum-Golgi intermediate compartment) and thereby secretion. Interacts with ATP6V1A and with MTOR, forming a ternary complex. As to expression, lens as well as other tissues.

The protein resides in the cytoplasm. The protein localises to the nucleus. Its subcellular location is the secreted. It localises to the lysosome. In terms of biological role, may contribute to the transparency and refractive index of the lens. Has chaperone-like activity, preventing aggregation of various proteins under a wide range of stress conditions. In lens epithelial cells, stabilizes the ATP6V1A protein, preventing its degradation by the proteasome. The protein is Alpha-crystallin B chain of Rattus norvegicus (Rat).